We begin with the raw amino-acid sequence, 185 residues long: Elongation factor P (185 aa).

The protein belongs to the elongation factor P family.

It localises to the cytoplasm. It functions in the pathway protein biosynthesis; polypeptide chain elongation. Involved in peptide bond synthesis. Stimulates efficient translation and peptide-bond synthesis on native or reconstituted 70S ribosomes in vitro. Probably functions indirectly by altering the affinity of the ribosome for aminoacyl-tRNA, thus increasing their reactivity as acceptors for peptidyl transferase. The chain is Elongation factor P from Cyanothece sp. (strain PCC 7425 / ATCC 29141).